Reading from the N-terminus, the 749-residue chain is Ribosomal RNA large subunit methyltransferase K/L (749 aa).

The region spanning 43–154 (QGYKVCLWSR…KDKATIYLDL (112 aa)) is the THUMP domain. Residues 386–406 (VEPVAPKKTNKETPEPINPWT) form a disordered region.

Belongs to the methyltransferase superfamily. RlmKL family.

It localises to the cytoplasm. The enzyme catalyses guanosine(2445) in 23S rRNA + S-adenosyl-L-methionine = N(2)-methylguanosine(2445) in 23S rRNA + S-adenosyl-L-homocysteine + H(+). It carries out the reaction guanosine(2069) in 23S rRNA + S-adenosyl-L-methionine = N(2)-methylguanosine(2069) in 23S rRNA + S-adenosyl-L-homocysteine + H(+). Functionally, specifically methylates the guanine in position 2445 (m2G2445) and the guanine in position 2069 (m7G2069) of 23S rRNA. This is Ribosomal RNA large subunit methyltransferase K/L from Psychromonas ingrahamii (strain DSM 17664 / CCUG 51855 / 37).